The following is a 179-amino-acid chain: ATP synthase subunit b (179 aa).

A helical membrane pass occupies residues 27 to 47 (TAITFLVMLAVLAKFAWGPIV).

Belongs to the ATPase B chain family. As to quaternary structure, F-type ATPases have 2 components, F(1) - the catalytic core - and F(0) - the membrane proton channel. F(1) has five subunits: alpha(3), beta(3), gamma(1), delta(1), epsilon(1). F(0) has three main subunits: a(1), b(2) and c(10-14). The alpha and beta chains form an alternating ring which encloses part of the gamma chain. F(1) is attached to F(0) by a central stalk formed by the gamma and epsilon chains, while a peripheral stalk is formed by the delta and b chains.

The protein resides in the cell inner membrane. F(1)F(0) ATP synthase produces ATP from ADP in the presence of a proton or sodium gradient. F-type ATPases consist of two structural domains, F(1) containing the extramembraneous catalytic core and F(0) containing the membrane proton channel, linked together by a central stalk and a peripheral stalk. During catalysis, ATP synthesis in the catalytic domain of F(1) is coupled via a rotary mechanism of the central stalk subunits to proton translocation. Its function is as follows. Component of the F(0) channel, it forms part of the peripheral stalk, linking F(1) to F(0). The sequence is that of ATP synthase subunit b from Anaeromyxobacter dehalogenans (strain 2CP-C).